The chain runs to 176 residues: ATP synthase subunit b (176 aa).

A helical transmembrane segment spans residues 18 to 38 (GVEWGTVIVTVITFAILLALL).

Belongs to the ATPase B chain family. In terms of assembly, F-type ATPases have 2 components, F(1) - the catalytic core - and F(0) - the membrane proton channel. F(1) has five subunits: alpha(3), beta(3), gamma(1), delta(1), epsilon(1). F(0) has three main subunits: a(1), b(2) and c(10-14). The alpha and beta chains form an alternating ring which encloses part of the gamma chain. F(1) is attached to F(0) by a central stalk formed by the gamma and epsilon chains, while a peripheral stalk is formed by the delta and b chains.

The protein resides in the cell membrane. In terms of biological role, f(1)F(0) ATP synthase produces ATP from ADP in the presence of a proton or sodium gradient. F-type ATPases consist of two structural domains, F(1) containing the extramembraneous catalytic core and F(0) containing the membrane proton channel, linked together by a central stalk and a peripheral stalk. During catalysis, ATP synthesis in the catalytic domain of F(1) is coupled via a rotary mechanism of the central stalk subunits to proton translocation. Functionally, component of the F(0) channel, it forms part of the peripheral stalk, linking F(1) to F(0). The polypeptide is ATP synthase subunit b (Staphylococcus haemolyticus (strain JCSC1435)).